Here is a 318-residue protein sequence, read N- to C-terminus: Oxidoreductase swnN (318 aa).

The protein belongs to the NmrA-type oxidoreductase family. Isoflavone reductase subfamily.

The protein operates within mycotoxin biosynthesis. Aminotransferase; part of the gene cluster that mediates the biosynthesis of swainsonine (SW), a cytotoxic fungal alkaloid and a potential cancer therapy drug. Swainsonine production occurs via a multibranched pathway and is dispensable for fungal colonization of plants and infection of insect hosts. The first step of swainsonine biosynthesis is the production of the precursor pipecolic acid (PA) via conversion of L-lysine (Lys) to 1-piperideine-6-carboxylate (P6C) by the aminotransferase swnA, the latter being further reduced to PA by the reductase swnR. The PKS-NRPS hybrid synthetase swnK uptakes and condensates PA and malonyl-CoA with and without skipping of the ketoreductase (KR) domain in order to produce 3 intermediates, 1-oxoindolizidine, (1S)-1-hydroxyindolizin, and (1R)-1-hydroxyindolizine; with the transisomer (1S)-1-hydroxyindolizin being predominant. The terminal thioester reductase (TE) domain of swnK is involved in reduction of the thioester bond to release the intermediate aldehydes. The oxidoreductase swnN could contribute to the reduction of 1-oxoindolizidine to (1S)-1-hydroxyindolizin and (1R)-1-hydroxyindolizine, contributing to the major route of SW production. The dioxygenase swnH2 would be responsible for the oxidization of (1R)-1-hydroxyindolizine into (1R,2S)-1,2-dihydroxyindolizine and of (1S)-1-hydroxyindolizin to yield both (1R,2S)-1,2-dihydroxyindolizine and (1S,2S)-1,2-dihydroxyindolizine. The dioxygenase swnH1 then performs the conversion of the 1,2-dihydroxyindolizine epimers to SW. The chain is Oxidoreductase swnN from Arthroderma benhamiae (strain ATCC MYA-4681 / CBS 112371) (Trichophyton mentagrophytes).